Reading from the N-terminus, the 201-residue chain is dTTP/UTP pyrophosphatase (201 aa).

Asp75 functions as the Proton acceptor in the catalytic mechanism.

The protein belongs to the Maf family. YhdE subfamily. A divalent metal cation is required as a cofactor.

It localises to the cytoplasm. It carries out the reaction dTTP + H2O = dTMP + diphosphate + H(+). The catalysed reaction is UTP + H2O = UMP + diphosphate + H(+). Its function is as follows. Nucleoside triphosphate pyrophosphatase that hydrolyzes dTTP and UTP. May have a dual role in cell division arrest and in preventing the incorporation of modified nucleotides into cellular nucleic acids. The polypeptide is dTTP/UTP pyrophosphatase (Pseudomonas fluorescens (strain ATCC BAA-477 / NRRL B-23932 / Pf-5)).